A 269-amino-acid polypeptide reads, in one-letter code: MTSVKLDLDAADLRISRGSVPASTQLAEALKAQIIQQRLPRGGRLPSERELIDRSGLSRVTVRAAVGMLQRQGWLVRRQGLGTFVADPVEQELSCGVRTITEVLLSCGVTPQVDVLSHQTGPAPQRISETLGLVEVLCIRRRIRTGDQPLALVTAYLPPGVGPAVEPLLSGSADTETTYAMWERRLGVRIAQATHEIHAAGASPDVADALGLAVGSPVLVVDRTSYTNDGKPLEVVVFHHRPERYQFSVTLPRTLPGSGAGIIEKRDFA.

The 69-residue stretch at 20-88 (VPASTQLAEA…QGLGTFVADP (69 aa)) folds into the HTH gntR-type domain. Residues 48–67 (ERELIDRSGLSRVTVRAAVG) constitute a DNA-binding region (H-T-H motif).

In terms of assembly, homodimer.

With respect to regulation, DNA-binding activity is increased in the presence of L-arabinose and inhibited by the small molecule I-OMe-Tyrphostin. Functionally, transcriptional regulator required for survival in oxidative stress and for establishing infection in host tissues. Regulates the expression of a subset of genes involved in oxidative stress adaptation and virulence, enabling the bacteria to adapt and persist in host tissues. In Mycobacterium tuberculosis (strain ATCC 25618 / H37Rv), this protein is HTH-type transcriptional regulator Rv0792c.